Here is a 411-residue protein sequence, read N- to C-terminus: Alpha-1-antitrypsin 1-6 (411 aa).

The signal sequence occupies residues 1-25 (MTTPFSSHGLLLLVGLCCLLLITKT). N-linked (GlcNAc...) asparagine glycosylation is found at Asn50, Asn89, Asn101, and Asn164.

This sequence belongs to the serpin family. As to expression, expressed predominantly in epididymis where it is found in the epithelial cells of the caput, corpus and cauda epididymis.

It is found in the secreted. In terms of biological role, inhibitor of serine proteases. The chain is Alpha-1-antitrypsin 1-6 from Mus musculus (Mouse).